We begin with the raw amino-acid sequence, 359 residues long: Ribosome biogenesis protein BRX1 homolog (359 aa).

Over residues 1–12 (MGRKFQNKKKKA) the composition is skewed to basic residues. Residues 1–42 (MGRKFQNKKKKAAPQLEIVPLDENPPLPPQRSSDDVVPKKAR) are disordered. Residues 50–241 (QRVLVFSARG…PVKIFDGSFT (192 aa)) form the Brix domain.

The protein belongs to the BRX1 family.

It is found in the nucleus. Its subcellular location is the nucleolus. Functionally, required for biogenesis of the 60S ribosomal subunit. The protein is Ribosome biogenesis protein BRX1 homolog of Drosophila melanogaster (Fruit fly).